The sequence spans 92 residues: Small ribosomal subunit protein uS19 (92 aa).

The protein belongs to the universal ribosomal protein uS19 family.

Its function is as follows. Protein S19 forms a complex with S13 that binds strongly to the 16S ribosomal RNA. The protein is Small ribosomal subunit protein uS19 of Prochlorococcus marinus (strain MIT 9301).